We begin with the raw amino-acid sequence, 401 residues long: Anhydro-N-acetylmuramic acid kinase (401 aa).

Position 25 to 32 (25 to 32) interacts with ATP; the sequence is GTSLDGLD.

Belongs to the anhydro-N-acetylmuramic acid kinase family.

The catalysed reaction is 1,6-anhydro-N-acetyl-beta-muramate + ATP + H2O = N-acetyl-D-muramate 6-phosphate + ADP + H(+). Its pathway is amino-sugar metabolism; 1,6-anhydro-N-acetylmuramate degradation. The protein operates within cell wall biogenesis; peptidoglycan recycling. Functionally, catalyzes the specific phosphorylation of 1,6-anhydro-N-acetylmuramic acid (anhMurNAc) with the simultaneous cleavage of the 1,6-anhydro ring, generating MurNAc-6-P. Is required for the utilization of anhMurNAc either imported from the medium or derived from its own cell wall murein, and thus plays a role in cell wall recycling. The chain is Anhydro-N-acetylmuramic acid kinase from Pseudoalteromonas atlantica (strain T6c / ATCC BAA-1087).